We begin with the raw amino-acid sequence, 308 residues long: UPF0026 protein HP_0117 (308 aa).

Residues 18–248 (FGKSLGVDLS…SLPKRSITQA (231 aa)) enclose the Radical SAM core domain. The [4Fe-4S] cluster site is built by cysteine 33, cysteine 37, and cysteine 40.

The protein belongs to the UPF0026 family. The cofactor is [4Fe-4S] cluster.

The polypeptide is UPF0026 protein HP_0117 (Helicobacter pylori (strain ATCC 700392 / 26695) (Campylobacter pylori)).